The chain runs to 575 residues: V-type ATP synthase alpha chain (575 aa).

238–245 (GPFGAGKT) is a binding site for ATP.

It belongs to the ATPase alpha/beta chains family.

The enzyme catalyses ATP + H2O + 4 H(+)(in) = ADP + phosphate + 5 H(+)(out). Its function is as follows. Produces ATP from ADP in the presence of a proton gradient across the membrane. The V-type alpha chain is a catalytic subunit. The chain is V-type ATP synthase alpha chain from Borreliella afzelii (strain PKo) (Borrelia afzelii).